The chain runs to 280 residues: MGRAELLEGKMSTQDPSDLWSRSDGEAELLQDLGWYHGNLTRHAAEALLLSNGCDGSYLLRDSNETTGLYSLSVRAKDSVKHFHVEYTGYSFKFGFNEFSSLKDFVKHFANQPLIGSETGTLMVLKHPYPRKVEEPSIYESVRVHTAMQTGRTEDDLVPTAPSLGTKEGYLTKQGGLVKTWKTRWFTLHRNELKYFKDQMSPEPIRILDLTECSAVQFDYSQERVNCFCLVFPFRTFYLCAKTGVEADEWIKILRWKLSQIRKQLNQGEGTIRSRSFIFK.

The interval 1–20 (MGRAELLEGKMSTQDPSDLW) is disordered. An SH2 domain is found at 35-129 (WYHGNLTRHA…GTLMVLKHPY (95 aa)). Tyrosine 139 carries the post-translational modification Phosphotyrosine. Serine 141 is modified (phosphoserine). The 96-residue stretch at 164–259 (LGTKEGYLTK…WIKILRWKLS (96 aa)) folds into the PH domain.

Interacts with PtdIns(3,4,5)P3 and PLCG2. In vitro, interacts with PtdIns(3,4)P2. Phosphorylated on tyrosine residues. As to expression, highly expressed in placenta and lung, followed by brain, heart, kidney, liver, pancreas and skeletal muscle. Expressed by B-lymphocytes, but not T-lymphocytes or nonhematopoietic cells.

Its subcellular location is the cytoplasm. The protein localises to the membrane. May act as a B-cell-associated adapter that regulates B-cell antigen receptor (BCR)-signaling downstream of PI3K. In Homo sapiens (Human), this protein is Dual adapter for phosphotyrosine and 3-phosphotyrosine and 3-phosphoinositide (DAPP1).